A 737-amino-acid polypeptide reads, in one-letter code: Probable serine/threonine-protein kinase DDB_G0269628 (737 aa).

Residues 8-488 (YKLIKDLRSG…TLQKMDTSLL (481 aa)) enclose the Protein kinase domain. ATP-binding positions include 14–22 (LRSGGEGKA) and Lys36. Disordered regions lie at residues 155–251 (NTIQ…KKCS) and 278–298 (TTAATTTTTTNTTHSSSSSSN). Positions 156 to 167 (TIQHSHSSSSLV) are enriched in polar residues. The segment covering 168–229 (NGTTSPTNAT…PSSPSSPLSP (62 aa)) has biased composition (low complexity). Asp349 functions as the Proton acceptor in the catalytic mechanism.

It belongs to the protein kinase superfamily. NEK Ser/Thr protein kinase family. NIMA subfamily.

It carries out the reaction L-seryl-[protein] + ATP = O-phospho-L-seryl-[protein] + ADP + H(+). The enzyme catalyses L-threonyl-[protein] + ATP = O-phospho-L-threonyl-[protein] + ADP + H(+). The sequence is that of Probable serine/threonine-protein kinase DDB_G0269628 from Dictyostelium discoideum (Social amoeba).